A 214-amino-acid chain; its full sequence is Cell division protein DamX (214 aa).

2 stretches are compositionally biased toward polar residues: residues 1–14 and 43–53; these read GSGTPTEAQTQPQQ and QGMTGAASTLP. Residues 1-133 form a disordered region; that stretch reads GSGTPTEAQT…SVQSAPGSHY (133 aa). A helical membrane pass occupies residues 44 to 65; the sequence is GMTGAASTLPTAPATVMSGAAA. Low complexity-rich tracts occupy residues 78 to 97 and 110 to 131; these read QQHKTPAKTAAAKPTATQHK and SSTAKAGAVASSGSSVQSAPGS. The 78-residue stretch at 127–204 folds into the SPOR domain; it reads SAPGSHYTLQ…VQAKKPWVRP (78 aa).

Belongs to the DamX family.

It is found in the cell inner membrane. Non-essential cell division protein. This Serratia marcescens protein is Cell division protein DamX.